The chain runs to 488 residues: Surface lipoprotein assembly modifier 1 (488 aa).

Residues Met1–Ala31 form the signal peptide. The interval Glu32–Asp202 is N-terminal domain. 2 TPR repeats span residues Met118–Ala151 and Ala171–Trp204. A C-terminal probable beta barrel, partially restores export of lipoproteins region spans residues Ala203–Phe488. Beta stranded transmembrane passes span Trp204–Arg214, Val241–Ser252, Trp257–Gly267, Thr280–Asp291, Lys294–Arg304, Asn316–Trp325, Trp330–Arg340, Leu354–Arg364, Gln368–Tyr377, Gly393–Trp402, Leu407–Lys417, Leu439–Arg448, Ile455–Arg464, and Asn478–Phe488.

The protein belongs to the Slam family. Interacts with the C-terminal domain of surface lipoprotein TbpB.

It is found in the cell outer membrane. Functionally, required for correct export to the cell surface of some cell outer membrane lipoproteins both in Neisseria and heterologously in E.coli. In Neisseria meningitidis serogroup B (strain ATCC BAA-335 / MC58), this protein is Surface lipoprotein assembly modifier 1.